A 63-amino-acid polypeptide reads, in one-letter code: Prokaryotic ubiquitin-like protein Pup (63 aa).

Residues 1–35 (MSGQQSQINAGGGNGQGGDTPEFDAGQVSINSAGT) form a disordered region. The segment at 19 to 57 (DTPEFDAGQVSINSAGTDDLLDEIDGLLESNAEEFVRSY) is ARC ATPase binding. Glutamate 63 participates in a covalent cross-link: Isoglutamyl lysine isopeptide (Glu-Lys) (interchain with K-? in acceptor proteins).

This sequence belongs to the prokaryotic ubiquitin-like protein family. As to quaternary structure, strongly interacts with the proteasome-associated ATPase ARC through a hydrophobic interface; the interacting region of Pup lies in its C-terminal half. There is one Pup binding site per ARC hexamer ring.

The protein operates within protein degradation; proteasomal Pup-dependent pathway. In terms of biological role, protein modifier that is covalently attached to lysine residues of substrate proteins, thereby targeting them for proteasomal degradation. The tagging system is termed pupylation. The protein is Prokaryotic ubiquitin-like protein Pup of Corynebacterium aurimucosum (strain ATCC 700975 / DSM 44827 / CIP 107346 / CN-1) (Corynebacterium nigricans).